The chain runs to 578 residues: MNISAVFSALLVSIMAAVLWKHVKLLDQFYVIEEELELTRQSQELSQVRIDYQAALQALVEDGTRMVCSGRMHTDRVCRFESLCYSTEAEEFVFFHSNASIMLPNLGPRRFQPALLDLSSVDDHNTQYFNFIELPAAALKFMPKPVFVPDVALIMNRFNPDNLMHVFHDDLLPIFYTIQQFPDLDFESRLFFMEGWNEGLHFELYKFMSNKQPLLKEQLKTLGRLLCFTKSYVGLSKITTWYQYGFVQPQGPKANILVSGNEIRHFAKFMMGKLNITLDQNAAEAYIVLFSRSMNRLIVNEAELLLALAQEFQMKTITVSLEDHSFSDIVRLLSNATMLVSMHGAQLVTSLFLPKGAVVVELFPYGINPEHYTPYKTLSTLPGMELQYVAWQNTEEENTITYPDRPWEQGGIVHLETKEQERIKKSKEVPRHLCCRNPEWLFRIYQDTKVNISSLIQVIKSTVKKKLGLRRQKWTQGLYPGKVRESKCQASAQGTSEAKLFVSWQIPWNLKFLKVRDVKYEVWIQEQGENSYMPYILSQQNYTFSENIKPFTTYLVWIRCIFNKTLLGPFAEVLVCST.

Over 1–4 (MNIS) the chain is Cytoplasmic. Residues 5–25 (AVFSALLVSIMAAVLWKHVKL) form a helical; Signal-anchor for type II membrane protein membrane-spanning segment. Residues 26–578 (LDQFYVIEEE…PFAEVLVCST (553 aa)) lie on the Lumenal side of the membrane. N-linked (GlcNAc...) asparagine glycosylation is found at N98, N275, N335, N451, N541, and N563. Positions 484–578 (RESKCQASAQ…PFAEVLVCST (95 aa)) constitute a Fibronectin type-III domain.

It belongs to the glycosyltransferase 61 family.

The protein localises to the endoplasmic reticulum membrane. It carries out the reaction 3-O-(alpha-D-mannosyl)-L-threonyl-[protein] + UDP-N-acetyl-alpha-D-glucosamine = 3-O-(N-acetyl-beta-D-glucosaminyl-(1-&gt;4)-alpha-D-mannosyl)-L-threonyl-[protein] + UDP + H(+). The protein operates within protein modification; protein glycosylation. Its function is as follows. O-linked mannose beta-1,4-N-acetylglucosaminyltransferase that transfers UDP-N-acetyl-D-glucosamine to the 4-position of the mannose to generate N-acetyl-D-glucosamine-beta-1,4-O-D-mannosylprotein. Involved in the biosynthesis of the phosphorylated O-mannosyl trisaccharide (N-acetylgalactosamine-beta-3-N-acetylglucosamine-beta-4-(phosphate-6-)mannose), a carbohydrate structure present in alpha-dystroglycan (DAG1), which is required for binding laminin G-like domain-containing extracellular proteins with high affinity. The chain is Protein O-linked-mannose beta-1,4-N-acetylglucosaminyltransferase 2 (pomgnt2) from Xenopus laevis (African clawed frog).